A 382-amino-acid chain; its full sequence is Mannitol-1-phosphate 5-dehydrogenase (382 aa).

Residue 3-14 (ALHFGAGNIGRG) participates in NAD(+) binding.

The protein belongs to the mannitol dehydrogenase family.

It catalyses the reaction D-mannitol 1-phosphate + NAD(+) = beta-D-fructose 6-phosphate + NADH + H(+). This Klebsiella pneumoniae protein is Mannitol-1-phosphate 5-dehydrogenase (mtlD).